A 230-amino-acid chain; its full sequence is Cytochrome c oxidase subunit 2 (230 aa).

Topologically, residues 1–14 (MAHPTQLGFQDAAS) are mitochondrial intermembrane. The helical transmembrane segment at 15-45 (PVMEELLHFHDHALMIVFLISTLVLYIIIAM) threads the bilayer. The Mitochondrial matrix portion of the chain corresponds to 46–59 (VSTKLTNKYILDSQ). Residues 60–87 (EIEIVWTILPAVILVLIALPSLRILYLM) traverse the membrane as a helical segment. At 88 to 230 (DEINDPHLTI…NWSSLMLEDA (143 aa)) the chain is on the mitochondrial intermembrane side. His161, Cys196, Glu198, Cys200, His204, and Met207 together coordinate Cu cation. Glu198 provides a ligand contact to Mg(2+).

Belongs to the cytochrome c oxidase subunit 2 family. Component of the cytochrome c oxidase (complex IV, CIV), a multisubunit enzyme composed of 14 subunits. The complex is composed of a catalytic core of 3 subunits MT-CO1, MT-CO2 and MT-CO3, encoded in the mitochondrial DNA, and 11 supernumerary subunits COX4I, COX5A, COX5B, COX6A, COX6B, COX6C, COX7A, COX7B, COX7C, COX8 and NDUFA4, which are encoded in the nuclear genome. The complex exists as a monomer or a dimer and forms supercomplexes (SCs) in the inner mitochondrial membrane with NADH-ubiquinone oxidoreductase (complex I, CI) and ubiquinol-cytochrome c oxidoreductase (cytochrome b-c1 complex, complex III, CIII), resulting in different assemblies (supercomplex SCI(1)III(2)IV(1) and megacomplex MCI(2)III(2)IV(2)). Found in a complex with TMEM177, COA6, COX18, COX20, SCO1 and SCO2. Interacts with TMEM177 in a COX20-dependent manner. Interacts with COX20. Interacts with COX16. The cofactor is Cu cation.

The protein resides in the mitochondrion inner membrane. It carries out the reaction 4 Fe(II)-[cytochrome c] + O2 + 8 H(+)(in) = 4 Fe(III)-[cytochrome c] + 2 H2O + 4 H(+)(out). Its function is as follows. Component of the cytochrome c oxidase, the last enzyme in the mitochondrial electron transport chain which drives oxidative phosphorylation. The respiratory chain contains 3 multisubunit complexes succinate dehydrogenase (complex II, CII), ubiquinol-cytochrome c oxidoreductase (cytochrome b-c1 complex, complex III, CIII) and cytochrome c oxidase (complex IV, CIV), that cooperate to transfer electrons derived from NADH and succinate to molecular oxygen, creating an electrochemical gradient over the inner membrane that drives transmembrane transport and the ATP synthase. Cytochrome c oxidase is the component of the respiratory chain that catalyzes the reduction of oxygen to water. Electrons originating from reduced cytochrome c in the intermembrane space (IMS) are transferred via the dinuclear copper A center (CU(A)) of subunit 2 and heme A of subunit 1 to the active site in subunit 1, a binuclear center (BNC) formed by heme A3 and copper B (CU(B)). The BNC reduces molecular oxygen to 2 water molecules using 4 electrons from cytochrome c in the IMS and 4 protons from the mitochondrial matrix. The chain is Cytochrome c oxidase subunit 2 (mt-co2) from Carassius auratus (Goldfish).